The chain runs to 141 residues: VLSSQDKANVKAVWEHVKGHEEVYGAEALHRAFVCDPQTQTYFAGKDLKENSAYLHGHGKKVMSALTNAVAHIDDIEGSMSKLSDKHAHELMVDPGNFDILAHHILTTMAMFMPQCLTSANHRSVDKFLSTVKHVLTSKYR.

The Globin domain occupies 1–141; sequence VLSSQDKANV…VKHVLTSKYR (141 aa). His-58 is a binding site for O2. His-87 is a heme b binding site.

Belongs to the globin family. In terms of assembly, minor hemoglobin is a heterotetramer of two alpha-2 chains and two beta-2 chains. In terms of tissue distribution, red blood cells.

Involved in oxygen transport from the lung to the various peripheral tissues. This is Hemoglobin subunit alpha-2 from Triturus cristatus (Great crested newt).